Here is a 614-residue protein sequence, read N- to C-terminus: 1-deoxy-D-xylulose-5-phosphate synthase (614 aa).

Residues H74 and 115 to 117 (AHS) contribute to the thiamine diphosphate site. A Mg(2+)-binding site is contributed by D146. Thiamine diphosphate-binding positions include 147–148 (GA), N175, Y282, and E363. N175 lines the Mg(2+) pocket.

It belongs to the transketolase family. DXPS subfamily. In terms of assembly, homodimer. It depends on Mg(2+) as a cofactor. The cofactor is thiamine diphosphate.

It catalyses the reaction D-glyceraldehyde 3-phosphate + pyruvate + H(+) = 1-deoxy-D-xylulose 5-phosphate + CO2. It participates in metabolic intermediate biosynthesis; 1-deoxy-D-xylulose 5-phosphate biosynthesis; 1-deoxy-D-xylulose 5-phosphate from D-glyceraldehyde 3-phosphate and pyruvate: step 1/1. Functionally, catalyzes the acyloin condensation reaction between C atoms 2 and 3 of pyruvate and glyceraldehyde 3-phosphate to yield 1-deoxy-D-xylulose-5-phosphate (DXP). The sequence is that of 1-deoxy-D-xylulose-5-phosphate synthase from Nitrosomonas europaea (strain ATCC 19718 / CIP 103999 / KCTC 2705 / NBRC 14298).